A 424-amino-acid chain; its full sequence is Glucose-1-phosphate adenylyltransferase (424 aa).

Alpha-D-glucose 1-phosphate is bound by residues tyrosine 112, glycine 177, 192–193 (EK), and serine 210.

Belongs to the bacterial/plant glucose-1-phosphate adenylyltransferase family. As to quaternary structure, homotetramer.

It catalyses the reaction alpha-D-glucose 1-phosphate + ATP + H(+) = ADP-alpha-D-glucose + diphosphate. The protein operates within glycan biosynthesis; glycogen biosynthesis. In terms of biological role, involved in the biosynthesis of ADP-glucose, a building block required for the elongation reactions to produce glycogen. Catalyzes the reaction between ATP and alpha-D-glucose 1-phosphate (G1P) to produce pyrophosphate and ADP-Glc. This chain is Glucose-1-phosphate adenylyltransferase, found in Methylococcus capsulatus (strain ATCC 33009 / NCIMB 11132 / Bath).